Reading from the N-terminus, the 237-residue chain is Uridylate kinase (237 aa).

11-14 (KLSG) is an ATP binding site. Glycine 53 provides a ligand contact to UMP. Residues glycine 54 and arginine 58 each coordinate ATP. UMP contacts are provided by residues aspartate 73 and 134–141 (TGNPFFTT). Residues threonine 161, tyrosine 167, and aspartate 170 each coordinate ATP.

It belongs to the UMP kinase family. Homohexamer.

It is found in the cytoplasm. The enzyme catalyses UMP + ATP = UDP + ADP. Its pathway is pyrimidine metabolism; CTP biosynthesis via de novo pathway; UDP from UMP (UMPK route): step 1/1. Its activity is regulated as follows. Inhibited by UTP. In terms of biological role, catalyzes the reversible phosphorylation of UMP to UDP. In Burkholderia vietnamiensis (strain G4 / LMG 22486) (Burkholderia cepacia (strain R1808)), this protein is Uridylate kinase.